The sequence spans 145 residues: Acidic phospholipase A2 (145 aa).

An N-terminal signal peptide occupies residues 1 to 21 (MYPAHLLVLLAVCVSLLGAAS). Positions 22–27 (IPPLPL) are excised as a propeptide. 7 disulfides stabilise this stretch: Cys-38/Cys-98, Cys-54/Cys-144, Cys-56/Cys-72, Cys-71/Cys-125, Cys-78/Cys-118, Cys-87/Cys-111, and Cys-105/Cys-116. Ca(2+) contacts are provided by Tyr-55 and Gly-57. The active site involves His-75. Asp-76 provides a ligand contact to Ca(2+). Asp-119 is an active-site residue.

Belongs to the phospholipase A2 family. Group I subfamily. D49 sub-subfamily. The cofactor is Ca(2+). As to expression, expressed by the venom gland.

It is found in the secreted. It carries out the reaction a 1,2-diacyl-sn-glycero-3-phosphocholine + H2O = a 1-acyl-sn-glycero-3-phosphocholine + a fatty acid + H(+). In terms of biological role, PLA2 catalyzes the calcium-dependent hydrolysis of the 2-acyl groups in 3-sn-phosphoglycerides. The chain is Acidic phospholipase A2 from Notechis scutatus scutatus (Mainland tiger snake).